The sequence spans 353 residues: WD repeat-containing protein 55 (353 aa).

WD repeat units follow at residues 4–43 (DLGANAFGIDFHPSTNLVAAGLIDGHLHLYRYDSDSSLVR), 49–88 (AHKESCRAVRFIDDGQRIVTASADCSILATDVETGAQVAH), 92–130 (AHEDAVNTLINVTETTIASGDDKGCVKIWDTRQRSCSHE), 133–172 (AHEDYISGMTFASDSMKLVVTSGDGTLSVCNLRTSKVQSQ), 175–214 (FSEDELLSVVIMKNGRKVICGTQNGTLLLYSWGFFKDCSD), 218–257 (DLAPNSVDALLKLDEDRLITGCDNGIISLVGILPNRIIQP), and 260–299 (SHDYPIEDLALSHDKKFLGSTAHDSMLKLWNLEEILEGSN). Residues 300 to 353 (VNSGNASGAAEDSDSDNDGMDLDNDPSKSSKGSKRKTKSKANTLNATNNFFADL) are disordered. A compositionally biased stretch (acidic residues) spans 310–323 (EDSDSDNDGMDLDN). Residues 339–353 (KANTLNATNNFFADL) are compositionally biased toward low complexity.

Belongs to the WD repeat WDR55 family. As to quaternary structure, interacts with DDB1A. In terms of tissue distribution, highly expressed in roots. Expressed in cotyledons, leaves, buds and flowers.

It is found in the nucleus. It localises to the cytoplasm. Its function is as follows. Required for male and female gametogenesis, seed development, and embryo and endosperm development at early stages. Involved in the establishment of bilateral symmetry in the transition from the globular to the heart embryo stage. May act in the frame of a CRL4 complex. Required for proper vegetative growth and organization of the adult plant body. May play a role in hormonal control of plant development. In Arabidopsis thaliana (Mouse-ear cress), this protein is WD repeat-containing protein 55.